Here is a 208-residue protein sequence, read N- to C-terminus: Ribosomal RNA small subunit methyltransferase G (208 aa).

S-adenosyl-L-methionine-binding positions include G73, L78, 127-128 (VE), and R141.

Belongs to the methyltransferase superfamily. RNA methyltransferase RsmG family.

The protein resides in the cytoplasm. The catalysed reaction is guanosine(527) in 16S rRNA + S-adenosyl-L-methionine = N(7)-methylguanosine(527) in 16S rRNA + S-adenosyl-L-homocysteine. Its function is as follows. Specifically methylates the N7 position of guanine in position 527 of 16S rRNA. The protein is Ribosomal RNA small subunit methyltransferase G of Cereibacter sphaeroides (strain ATCC 17025 / ATH 2.4.3) (Rhodobacter sphaeroides).